The following is a 76-amino-acid chain: Sec-independent protein translocase protein TatA (76 aa).

The chain crosses the membrane as a helical span at residues 1–21; the sequence is MLGGLTGWHLLIILAVILLLF. The span at 44–57 shows a compositional bias: basic and acidic residues; that stretch reads VNEMKKDGDKDKGE. The segment at 44–76 is disordered; that stretch reads VNEMKKDGDKDKGEGGSTAPATDTGASSEQNSK. Residues 62–76 show a composition bias toward polar residues; the sequence is APATDTGASSEQNSK.

Belongs to the TatA/E family. The Tat system comprises two distinct complexes: a TatABC complex, containing multiple copies of TatA, TatB and TatC subunits, and a separate TatA complex, containing only TatA subunits. Substrates initially bind to the TatABC complex, which probably triggers association of the separate TatA complex to form the active translocon.

The protein localises to the cell membrane. Part of the twin-arginine translocation (Tat) system that transports large folded proteins containing a characteristic twin-arginine motif in their signal peptide across membranes. TatA could form the protein-conducting channel of the Tat system. The protein is Sec-independent protein translocase protein TatA of Leifsonia xyli subsp. xyli (strain CTCB07).